A 367-amino-acid polypeptide reads, in one-letter code: GDP-perosamine synthase (367 aa).

The residue at position 181 (K181) is an N6-(pyridoxal phosphate)lysine.

This sequence belongs to the DegT/DnrJ/EryC1 family. Homotetramer. Pyridoxal 5'-phosphate serves as cofactor.

It carries out the reaction GDP-alpha-D-perosamine + 2-oxoglutarate = GDP-4-dehydro-alpha-D-rhamnose + L-glutamate. Its pathway is bacterial outer membrane biogenesis; LPS O-antigen biosynthesis. In terms of biological role, catalyzes the synthesis of GDP-perosamine from GDP-4-keto-6-deoxy-D-mannose and L-glutamate. Also shows weak activity with L-glutamine. This is GDP-perosamine synthase from Vibrio cholerae.